The chain runs to 481 residues: Protein DETOXIFICATION 12 (481 aa).

The next 12 helical transmembrane spans lie at Leu-38 to Val-58, Leu-76 to Leu-96, Tyr-117 to Met-137, Ala-154 to Leu-174, Leu-187 to Tyr-207, Leu-214 to Phe-234, Ala-267 to Leu-287, Val-296 to Ala-316, Ile-336 to Leu-356, Met-380 to Ile-400, Leu-415 to Leu-435, and Val-438 to Val-458.

The protein belongs to the multi antimicrobial extrusion (MATE) (TC 2.A.66.1) family.

It localises to the membrane. This is Protein DETOXIFICATION 12 from Arabidopsis thaliana (Mouse-ear cress).